A 758-amino-acid polypeptide reads, in one-letter code: Maturase-like protein 2 (758 aa).

The protein resides in the plastid. It is found in the chloroplast. This is Maturase-like protein 2 (mat2) from Euglena gracilis.